A 226-amino-acid polypeptide reads, in one-letter code: MHSRKICVSLGQPTMPQALEASLRIFGADVIEVRLDYIDVPEIDPFVESLATDLLFTCRPTWEGGLFAGTEEDRLALLAEAVRAGAAYIDLELRSAEESHQYLRTYLAERETELILSYHDFESTATLAKLTGIIDQMQDAGADIGKLITTANSAADVVRVFQVLEYAAKKGLPLIAFCMGEAGAVSRVASCDLGGYMTYCCADGAEVTAAGQITISEMRGIFARYP.

3-dehydroquinate is bound by residues Ser-9, Glu-32–Arg-34, and Arg-59. His-119 serves as the catalytic Proton donor/acceptor. Lys-146 (schiff-base intermediate with substrate) is an active-site residue. 3 residues coordinate 3-dehydroquinate: Arg-187, Thr-208, and Gln-212.

Belongs to the type-I 3-dehydroquinase family. As to quaternary structure, homodimer.

It carries out the reaction 3-dehydroquinate = 3-dehydroshikimate + H2O. Its pathway is metabolic intermediate biosynthesis; chorismate biosynthesis; chorismate from D-erythrose 4-phosphate and phosphoenolpyruvate: step 3/7. In terms of biological role, involved in the third step of the chorismate pathway, which leads to the biosynthesis of aromatic amino acids. Catalyzes the cis-dehydration of 3-dehydroquinate (DHQ) and introduces the first double bond of the aromatic ring to yield 3-dehydroshikimate. The protein is 3-dehydroquinate dehydratase of Desulfotalea psychrophila (strain LSv54 / DSM 12343).